The following is a 314-amino-acid chain: F-box protein AUF2 (314 aa).

Residues 1 to 49 form the F-box domain; the sequence is MDVFDGLPDPIIVDILNKVGDVKTLLRCSSLSKRFNSLVPQSESLTLRL.

In terms of assembly, part of a SCF (ASK-cullin-F-box) protein ligase complex.

It is found in the nucleus. Its pathway is protein modification; protein ubiquitination. Its function is as follows. Component of SCF(ASK-cullin-F-box) E3 ubiquitin ligase complexes, which may mediate the ubiquitination and subsequent proteasomal degradation of target proteins. This Arabidopsis thaliana (Mouse-ear cress) protein is F-box protein AUF2.